We begin with the raw amino-acid sequence, 129 residues long: Small ribosomal subunit protein uS8 (129 aa).

Belongs to the universal ribosomal protein uS8 family. As to quaternary structure, part of the 30S ribosomal subunit. Contacts proteins S5 and S12.

One of the primary rRNA binding proteins, it binds directly to 16S rRNA central domain where it helps coordinate assembly of the platform of the 30S subunit. In Dichelobacter nodosus (strain VCS1703A), this protein is Small ribosomal subunit protein uS8.